The primary structure comprises 93 residues: DNA-directed RNA polymerase subunit omega (93 aa).

This sequence belongs to the RNA polymerase subunit omega family. The RNAP catalytic core consists of 2 alpha, 1 beta, 1 beta' and 1 omega subunit. When a sigma factor is associated with the core the holoenzyme is formed, which can initiate transcription.

It carries out the reaction RNA(n) + a ribonucleoside 5'-triphosphate = RNA(n+1) + diphosphate. In terms of biological role, promotes RNA polymerase assembly. Latches the N- and C-terminal regions of the beta' subunit thereby facilitating its interaction with the beta and alpha subunits. This chain is DNA-directed RNA polymerase subunit omega, found in Actinobacillus pleuropneumoniae serotype 7 (strain AP76).